A 164-amino-acid chain; its full sequence is FMN reductase (NADH) RutF (164 aa).

This sequence belongs to the non-flavoprotein flavin reductase family. RutF subfamily.

It catalyses the reaction FMNH2 + NAD(+) = FMN + NADH + 2 H(+). In terms of biological role, catalyzes the reduction of FMN to FMNH2 which is used to reduce pyrimidine by RutA via the Rut pathway. This Escherichia coli O6:K15:H31 (strain 536 / UPEC) protein is FMN reductase (NADH) RutF.